The sequence spans 522 residues: Peptide methionine sulfoxide reductase MsrA/MsrB (522 aa).

The Thioredoxin domain maps to 17–174; sequence LALGACSPKI…ALALIRNPNA (158 aa). Cys68 and Cys71 are joined by a disulfide. The segment at 199–354 is peptide methionine sulfoxide reductase A; the sequence is RTIYLAGGCF…PNGYCHIDIR (156 aa). Residue Cys207 is part of the active site. Residues 383-506 form the MsrB domain; the sequence is DAELKRTLTE…NGASLKFIPL (124 aa). A disulfide bridge links Cys440 with Cys495. Residue Cys495 is the Nucleophile of the active site.

In the N-terminal section; belongs to the thioredoxin family. It in the central section; belongs to the MsrA Met sulfoxide reductase family. The protein in the C-terminal section; belongs to the MsrB Met sulfoxide reductase family.

It catalyses the reaction L-methionyl-[protein] + [thioredoxin]-disulfide + H2O = L-methionyl-(S)-S-oxide-[protein] + [thioredoxin]-dithiol. The enzyme catalyses [thioredoxin]-disulfide + L-methionine + H2O = L-methionine (S)-S-oxide + [thioredoxin]-dithiol. The catalysed reaction is L-methionyl-[protein] + [thioredoxin]-disulfide + H2O = L-methionyl-(R)-S-oxide-[protein] + [thioredoxin]-dithiol. Has an important function as a repair enzyme for proteins that have been inactivated by oxidation. Catalyzes the reversible oxidation-reduction of methionine sulfoxide in proteins to methionine. This chain is Peptide methionine sulfoxide reductase MsrA/MsrB (msrAB), found in Neisseria gonorrhoeae.